A 350-amino-acid chain; its full sequence is ADP-ribose pyrophosphatase, mitochondrial (350 aa).

The transit peptide at 1-46 (MAGRSLGKAVATVSLSVALASVTVRSSGCRAIPAPRNPFPSCGFHL) directs the protein to the mitochondrion. Disordered regions lie at residues 53–77 (GSNG…KVER) and 116–153 (SESS…PAGR). Ser-121 is subject to Phosphoserine. Over residues 124–135 (FNEKDGHVERKS) the composition is skewed to basic and acidic residues. The 157-residue stretch at 178–334 (WKRDESGNKI…SQFIKLVAEK (157 aa)) folds into the Nudix hydrolase domain. The Nudix box signature appears at 215 to 237 (GMVDPGEKISATLKREFGEEALN).

It belongs to the Nudix hydrolase family. NudF subfamily. In terms of assembly, monomer. Interacts with GLOD4. Mg(2+) is required as a cofactor. Requires Mn(2+) as cofactor.

It localises to the mitochondrion. It catalyses the reaction ADP-D-ribose + H2O = D-ribose 5-phosphate + AMP + 2 H(+). Its function is as follows. Hydrolyzes ADP-ribose (ADPR) to AMP and ribose 5'-phosphate. This is ADP-ribose pyrophosphatase, mitochondrial (Nudt9) from Rattus norvegicus (Rat).